A 440-amino-acid polypeptide reads, in one-letter code: tRNA-2-methylthio-N(6)-dimethylallyladenosine synthase (440 aa).

Residues 3-119 (KKFFIKTFGC…LPELINQAQA (117 aa)) form the MTTase N-terminal domain. Positions 12, 48, 82, 158, 162, and 165 each coordinate [4Fe-4S] cluster. Residues 144-374 (RDNKYCAYVT…LELQKSILSE (231 aa)) enclose the Radical SAM core domain. The TRAM domain maps to 377–437 (KKYEGTVQEV…PFSLEGELLE (61 aa)).

The protein belongs to the methylthiotransferase family. MiaB subfamily. As to quaternary structure, monomer. Requires [4Fe-4S] cluster as cofactor.

It localises to the cytoplasm. The enzyme catalyses N(6)-dimethylallyladenosine(37) in tRNA + (sulfur carrier)-SH + AH2 + 2 S-adenosyl-L-methionine = 2-methylsulfanyl-N(6)-dimethylallyladenosine(37) in tRNA + (sulfur carrier)-H + 5'-deoxyadenosine + L-methionine + A + S-adenosyl-L-homocysteine + 2 H(+). Catalyzes the methylthiolation of N6-(dimethylallyl)adenosine (i(6)A), leading to the formation of 2-methylthio-N6-(dimethylallyl)adenosine (ms(2)i(6)A) at position 37 in tRNAs that read codons beginning with uridine. The polypeptide is tRNA-2-methylthio-N(6)-dimethylallyladenosine synthase (Aquifex aeolicus (strain VF5)).